A 91-amino-acid chain; its full sequence is Auxin-responsive protein SAUR20 (91 aa).

Belongs to the ARG7 family.

The protein localises to the cell membrane. Its function is as follows. Functions as a positive effector of cell expansion through modulation of auxin transport. In Arabidopsis thaliana (Mouse-ear cress), this protein is Auxin-responsive protein SAUR20.